A 288-amino-acid polypeptide reads, in one-letter code: uncharacterized protein (288 aa).

Disordered regions lie at residues 31–52 (KAVD…EAPS) and 179–288 (YPSK…VELK). Positions 206–217 (RPSSPTNFSKLI) are enriched in polar residues. Positions 221-236 (YKDEWLQQQADSDKRA) are enriched in basic and acidic residues. Composition is skewed to low complexity over residues 237 to 249 (PQTP…SPSP) and 267 to 276 (AAESSPLSSA).

This is an uncharacterized protein from Bos taurus (Bovine).